A 275-amino-acid chain; its full sequence is NH(3)-dependent NAD(+) synthetase (275 aa).

50 to 57 (GISGGVDS) contributes to the ATP binding site. Mg(2+) is bound at residue Asp56. Arg147 serves as a coordination point for deamido-NAD(+). An ATP-binding site is contributed by Thr167. Residue Glu172 participates in Mg(2+) binding. Residues Lys180 and Asp187 each coordinate deamido-NAD(+). ATP contacts are provided by Lys196 and Thr218. 267–268 (HK) contacts deamido-NAD(+).

Belongs to the NAD synthetase family. In terms of assembly, homodimer.

The catalysed reaction is deamido-NAD(+) + NH4(+) + ATP = AMP + diphosphate + NAD(+) + H(+). It participates in cofactor biosynthesis; NAD(+) biosynthesis; NAD(+) from deamido-NAD(+) (ammonia route): step 1/1. Catalyzes the ATP-dependent amidation of deamido-NAD to form NAD. Uses ammonia as a nitrogen source. This is NH(3)-dependent NAD(+) synthetase from Pseudomonas aeruginosa (strain LESB58).